The primary structure comprises 545 residues: Probable protein kinase UbiB (545 aa).

In terms of domain architecture, Protein kinase spans 123 to 501 (DFDIVPLASA…RVRQHQSHYL (379 aa)). ATP is bound by residues 129 to 137 (LASASIAQV) and lysine 152. The Proton acceptor role is filled by aspartate 287. A run of 2 helical transmembrane segments spans residues 498–518 (SHYL…VVLS) and 521–541 (EWDG…LVGW).

It belongs to the ABC1 family. UbiB subfamily.

It localises to the cell inner membrane. The protein operates within cofactor biosynthesis; ubiquinone biosynthesis [regulation]. Functionally, is probably a protein kinase regulator of UbiI activity which is involved in aerobic coenzyme Q (ubiquinone) biosynthesis. The protein is Probable protein kinase UbiB of Erwinia tasmaniensis (strain DSM 17950 / CFBP 7177 / CIP 109463 / NCPPB 4357 / Et1/99).